We begin with the raw amino-acid sequence, 1640 residues long: Clathrin heavy chain 2 (1640 aa).

Ala-2 bears the N-acetylalanine mark. Residues 2 to 479 (AQILPVRFQE…TDPMLALSVY (478 aa)) are globular terminal domain. WD40-like repeat stretches follow at residues 24–67 (NIGF…RPIS), 68–107 (AESA…MAEE), 108–149 (VIFW…TSLV), 150–195 (GCQV…QPIE), 196–257 (GHAA…PEAQ), 258–301 (NDFP…ISAD), and 302–330 (TIFV…VCVE). The residue at position 67 (Ser-67) is a Phosphoserine. Tyr-184 carries the post-translational modification Phosphotyrosine. Thr-394 is modified (phosphothreonine). The interval 449–465 (EKWLKEDKLECSEELGD) is binding site for the uncoating ATPase, involved in lattice disassembly. The tract at residues 480-523 (LRANVPSKVIQCFAETGQFQKIVLYAKKVGYTPDWIFLLRGVMK) is flexible linker. The interval 524 to 634 (ISPEQGLQFS…QALEHYTDLY (111 aa)) is distal segment. The segment at 524-1640 (ISPEQGLQFS…PLVFDFDGHE (1117 aa)) is heavy chain arm. 7 CHCR repeats span residues 537–683 (VQDE…QLCV), 686–828 (ASKY…SEEV), 833–972 (IMAV…QLID), 979–1124 (LSET…VKEA), 1128–1269 (YIRG…FRFA), 1274–1420 (LHIV…LLIN), and 1423–1566 (LLVL…RECF). Phosphotyrosine is present on Tyr-634. The interval 639–1640 (AVVHTHLLNP…PLVFDFDGHE (1002 aa)) is proximal segment. Position 737 is an N6-succinyllysine (Lys-737). An N6-acetyllysine modification is found at Lys-856. Tyr-899 is subject to Phosphotyrosine. Position 1167 is a phosphoserine (Ser-1167). Tyr-1206 carries the post-translational modification Phosphotyrosine. The segment at 1213 to 1522 (AAKLLYSNVS…YLYKGNNWWA (310 aa)) is involved in binding clathrin light chain. A Phosphoserine modification is found at Ser-1229. Lys-1441 is subject to N6-acetyllysine; alternate. An N6-succinyllysine; alternate modification is found at Lys-1441. Tyr-1477 and Tyr-1487 each carry phosphotyrosine. Ser-1494 is modified (phosphoserine). Lys-1501 carries the post-translational modification N6-acetyllysine. The segment at 1551–1640 (QKLLQWFLEE…PLVFDFDGHE (90 aa)) is trimerization.

This sequence belongs to the clathrin heavy chain family. As to quaternary structure, clathrin triskelions, composed of 3 heavy chains and 3 light chains, are the basic subunits of the clathrin coat. In the presence of light chains, hub assembly is influenced by both the pH and the concentration of calcium. May interact with OCRL. Interacts with AFTPH/aftiphilin. As to expression, maximal levels in skeletal muscle. High levels in heart and testis. Low expression detected in all other tissues.

It is found in the cytoplasmic vesicle membrane. It localises to the membrane. The protein resides in the coated pit. Its function is as follows. Clathrin is the major protein of the polyhedral coat of coated pits and vesicles. Two different adapter protein complexes link the clathrin lattice either to the plasma membrane or to the trans-Golgi network. In Homo sapiens (Human), this protein is Clathrin heavy chain 2 (CLTCL1).